Here is an 88-residue protein sequence, read N- to C-terminus: Phosphocarrier protein HPr (88 aa).

Positions 1–88 (MEQQSYTIID…DVLSKEGLTE (88 aa)) constitute an HPr domain. The active-site Pros-phosphohistidine intermediate is the His15. Ser46 carries the post-translational modification Phosphoserine; by HPrK/P.

It belongs to the HPr family.

The protein resides in the cytoplasm. Phosphorylation on Ser-46 inhibits the phosphoryl transfer from enzyme I to HPr. Its function is as follows. General (non sugar-specific) component of the phosphoenolpyruvate-dependent sugar phosphotransferase system (sugar PTS). This major carbohydrate active-transport system catalyzes the phosphorylation of incoming sugar substrates concomitantly with their translocation across the cell membrane. The phosphoryl group from phosphoenolpyruvate (PEP) is transferred to the phosphoryl carrier protein HPr by enzyme I. Phospho-HPr then transfers it to the PTS EIIA domain. In terms of biological role, P-Ser-HPr interacts with the catabolite control protein A (CcpA), forming a complex that binds to DNA at the catabolite response elements cre, operator sites preceding a large number of catabolite-regulated genes. Thus, P-Ser-HPr is a corepressor in carbon catabolite repression (CCR), a mechanism that allows bacteria to coordinate and optimize the utilization of available carbon sources. P-Ser-HPr also plays a role in inducer exclusion, in which it probably interacts with several non-PTS permeases and inhibits their transport activity. The polypeptide is Phosphocarrier protein HPr (ptsH) (Staphylococcus carnosus).